Here is a 191-residue protein sequence, read N- to C-terminus: UPF0312 protein SO_3370 (191 aa).

The signal sequence occupies residues 1–22 (MKKQLFSALIGASLFAPMAVSA).

This sequence belongs to the UPF0312 family. Type 1 subfamily.

It is found in the periplasm. The protein is UPF0312 protein SO_3370 of Shewanella oneidensis (strain ATCC 700550 / JCM 31522 / CIP 106686 / LMG 19005 / NCIMB 14063 / MR-1).